Here is a 223-residue protein sequence, read N- to C-terminus: uncharacterized protein (223 aa).

Basic residues predominate over residues Met1–Lys11. The segment at Met1–Ser37 is disordered. Residues Glu12 to Ser37 show a composition bias toward basic and acidic residues. Ser43 carries the post-translational modification Phosphoserine. 2 disordered regions span residues Leu49–Val73 and Thr196–His223. Residues Asn51 to Gln61 are compositionally biased toward polar residues. Positions Thr62–Val73 are enriched in low complexity. Residues His202 to His223 show a composition bias toward basic residues.

This is an uncharacterized protein from Homo sapiens (Human).